Here is a 122-residue protein sequence, read N- to C-terminus: MKAERSDDLKLKALKRGHLAEYRAALCLILKGYRIVAMRYRTRLGEIDIIARRGDLIACVEVKARRSFDDAIFAVSSTAQRRIRAASEVWLSRQGDFHRLSLRYDIVAVMPWRWPRHLTDAF.

It belongs to the UPF0102 family.

The sequence is that of UPF0102 protein Smed_3545 from Sinorhizobium medicae (strain WSM419) (Ensifer medicae).